Here is a 740-residue protein sequence, read N- to C-terminus: Ethylene receptor 1 (740 aa).

3 helical membrane passes run 23–43, 53–73, and 95–115; these read ISDF…IYFV, WVLV…LINL, and AAVS…LLSV. Residues Cys65 and His69 each contribute to the Cu cation site. One can recognise a GAF domain in the interval 158 to 307; it reads DRHTILKTTL…VVADQVAVAL (150 aa). The Histidine kinase domain occupies 350–587; the sequence is VMNHEMRTPM…TVTFVVKLGI (238 aa). Phosphohistidine; by autocatalysis is present on His353. A Response regulatory domain is found at 615-732; that stretch reads KVLLMDENGI…KMRNVLSKLL (118 aa). Asp663 carries the 4-aspartylphosphate modification.

This sequence belongs to the ethylene receptor family. Homodimer; disulfide-linked. Cu cation is required as a cofactor. In terms of processing, activation probably requires a transfer of a phosphate group between a His in the transmitter domain and an Asp of the receiver domain.

It is found in the endoplasmic reticulum membrane. It catalyses the reaction ATP + protein L-histidine = ADP + protein N-phospho-L-histidine.. Functionally, may act early in the ethylene signal transduction pathway, possibly as an ethylene receptor, or as a regulator of the pathway. The sequence is that of Ethylene receptor 1 (ETR1) from Pelargonium hortorum (Common geranium).